Reading from the N-terminus, the 513-residue chain is 2-isopropylmalate synthase (513 aa).

One can recognise a Pyruvate carboxyltransferase domain in the interval 5–268 (LIIFDTTLRD…DIGVDTTQIV (264 aa)). The Mn(2+) site is built by Asp-14, His-202, His-204, and Asn-239. The segment at 394 to 513 (RFISLSQRSE…KAVQKINPQI (120 aa)) is regulatory domain.

This sequence belongs to the alpha-IPM synthase/homocitrate synthase family. LeuA type 1 subfamily. As to quaternary structure, homodimer. It depends on Mn(2+) as a cofactor.

Its subcellular location is the cytoplasm. The enzyme catalyses 3-methyl-2-oxobutanoate + acetyl-CoA + H2O = (2S)-2-isopropylmalate + CoA + H(+). It participates in amino-acid biosynthesis; L-leucine biosynthesis; L-leucine from 3-methyl-2-oxobutanoate: step 1/4. In terms of biological role, catalyzes the condensation of the acetyl group of acetyl-CoA with 3-methyl-2-oxobutanoate (2-ketoisovalerate) to form 3-carboxy-3-hydroxy-4-methylpentanoate (2-isopropylmalate). This Cupriavidus necator (strain ATCC 17699 / DSM 428 / KCTC 22496 / NCIMB 10442 / H16 / Stanier 337) (Ralstonia eutropha) protein is 2-isopropylmalate synthase.